The chain runs to 512 residues: Cytochrome P450 monooxygenase poxM (512 aa).

The helical transmembrane segment at 15–35 (LLKGATIALSFFSLYLFGLVI) threads the bilayer. Residue C449 participates in heme binding.

Belongs to the cytochrome P450 family. The cofactor is heme.

It is found in the membrane. It functions in the pathway secondary metabolite biosynthesis. Its function is as follows. Cytochrome P450 monooxygenase; part of the gene cluster that mediates the biosynthesis of oxaleimides, cytotoxic compounds containing an unusual disubstituted succinimide moiety. The first step of the pathway is provided by the HR-PKS poxF that serves in a new mode of collaborative biosynthesis with the PKS-NRPS poxE, by providing the olefin containing amino acid substrate via the synthesis of an ACP-bound dec-4-enoate. The cytochrome P450 monooxygenase poxM-catalyzed oxidation at the alpha-position creates the enzyme-bound 2-hydroxydec-4-enoyl-ACP thioester, which may be prone to spontaneous hydrolysis to yield 2-hydroxydec-4-enoic acid due to increased electrophilicity of the carbonyl. 2-hydroxydec-4-enoic acid can then be further oxidized by poxM to yield the alpha-ketoacid 2-oxodec-4-enoicacid, which is reductively aminated by the aminotransferase poxL to yield (S,E)-2-aminodec-4-enoic acid. The Hybrid PKS-NRPS synthetase poxE then performs condensation between the octaketide product of its PKS modules and the amino group of (S,E)-2-aminodec-4-enoic acid which is activated and incorporated by the adenylation domain. The resulting aminoacyl product can be cyclized by the Diels-Alderase PoxQ and reductively released by the reductive (R) domain of poxE to yield an aldehyde intermediate. The released aldehyde is then substrate for a Knoevenagel condensation by the hydrolyase poxO followed by an oxidation at the 5-position of the pyrrolidone ring. The presence of the olefin from the amino acid building block allows for migration of the substituted allyl group to occur. This allylic transposition reaction takes place in a conjugate addition, semipinacol-like fashion to yield a succinimide intermediate. Iterative two-electron oxidations of the C7 methyl of the succinimide intermediate to the carboxylic acid can be catalyzed by one of two remaining cytochrome P450 monooxygenasess poxC or poxD to yield oxaleimide A. Subsequent oxidation yields the maleimide scaffold oxaleimide I. Both oxaleimide A and oxaleimide I can undergo oxidative modifications in the decalin ring to yield the series of products oxaleimides B to H. The polypeptide is Cytochrome P450 monooxygenase poxM (Penicillium oxalicum (strain 114-2 / CGMCC 5302) (Penicillium decumbens)).